A 215-amino-acid chain; its full sequence is MPEATPFQVMIVDDHPLMRRGVRQLLELDPGSEVVAEAGDGASAIDLANRLDIDVILLDLNMKGMSGLDTLNALRRDGVTAQIIILTVSDASSDVFALIDAGADGYLLKDSDPEVLLEAIRAGAKGSKVFSERVNQYLREREMFGAEEDPFSVLTERELDVLHELAQGLSNKQIASVLNISEQTVKVHIRNLLRKLNVRSRVAATILFLQQRGAQ.

A Response regulatory domain is found at 8–124; the sequence is QVMIVDDHPL…VLLEAIRAGA (117 aa). Position 59 is a 4-aspartylphosphate (Asp-59). One can recognise an HTH luxR-type domain in the interval 147-212; the sequence is EEDPFSVLTE…AATILFLQQR (66 aa). The H-T-H motif DNA-binding region spans 171–190; that stretch reads NKQIASVLNISEQTVKVHIR.

This protein activates the expression of the nitrate reductase (narGHJI) and formate dehydrogenase-N (fdnGHI) operons and represses the transcription of the fumarate reductase (frdABCD) operon in response to a nitrate/nitrite induction signal transmitted by either the NarX or NarQ proteins. This is Nitrate/nitrite response regulator protein NarP (narP) from Escherichia coli (strain K12).